Reading from the N-terminus, the 193-residue chain is MGLVFNNSTIVAPQAKGIIDPNTSKLIGANDQFFQDMNAELSDKGFLVTSVDSLITWARTGSLMWMSFGLACCAVEMMQCSMPHYDNERFGYAPRASPRQSDVMVVAGTLTNKMAPALRKVYDQMPEPRYVISMGSCANGGGYYHYSYSVVRGCDRIVPVDIYVPGCPPTAEALLYGILLLQKKIRRTGSIER.

The [4Fe-4S] cluster site is built by Cys-72, Cys-73, Cys-137, and Cys-167.

This sequence belongs to the complex I 20 kDa subunit family. NDH-1 is composed of 14 different subunits. Subunits NuoB, C, D, E, F, and G constitute the peripheral sector of the complex. Requires [4Fe-4S] cluster as cofactor.

The protein localises to the cell inner membrane. The catalysed reaction is a quinone + NADH + 5 H(+)(in) = a quinol + NAD(+) + 4 H(+)(out). Its function is as follows. NDH-1 shuttles electrons from NADH, via FMN and iron-sulfur (Fe-S) centers, to quinones in the respiratory chain. The immediate electron acceptor for the enzyme in this species is believed to be ubiquinone. Couples the redox reaction to proton translocation (for every two electrons transferred, four hydrogen ions are translocated across the cytoplasmic membrane), and thus conserves the redox energy in a proton gradient. The protein is NADH-quinone oxidoreductase subunit B of Bartonella bacilliformis (strain ATCC 35685 / KC583 / Herrer 020/F12,63).